The chain runs to 197 residues: uncharacterized protein (197 aa).

Positions Met-1–Ala-23 are cleaved as a signal peptide. Residues Asn-19 and Asn-26 are each glycosylated (N-linked (GlcNAc...) asparagine). Over Ser-24–Thr-61 the chain is Extracellular. A helical transmembrane segment spans residues Leu-62–Phe-82. The Cytoplasmic segment spans residues His-83 to Ser-197. Positions Met-94 to Ser-180 are disordered. 2 stretches are compositionally biased toward basic and acidic residues: residues Arg-96–Ser-107 and His-125–Arg-136. Residues Ser-147–Pro-161 are compositionally biased toward low complexity. A compositionally biased stretch (pro residues) spans Cys-162–Ser-171.

It localises to the membrane. This is an uncharacterized protein from Macaca fascicularis (Crab-eating macaque).